The chain runs to 250 residues: Pyrroloquinoline-quinone synthase (250 aa).

This sequence belongs to the PqqC family.

The enzyme catalyses 6-(2-amino-2-carboxyethyl)-7,8-dioxo-1,2,3,4,7,8-hexahydroquinoline-2,4-dicarboxylate + 3 O2 = pyrroloquinoline quinone + 2 H2O2 + 2 H2O + H(+). It participates in cofactor biosynthesis; pyrroloquinoline quinone biosynthesis. Its function is as follows. Ring cyclization and eight-electron oxidation of 3a-(2-amino-2-carboxyethyl)-4,5-dioxo-4,5,6,7,8,9-hexahydroquinoline-7,9-dicarboxylic-acid to PQQ. This is Pyrroloquinoline-quinone synthase from Xanthomonas euvesicatoria pv. vesicatoria (strain 85-10) (Xanthomonas campestris pv. vesicatoria).